A 176-amino-acid polypeptide reads, in one-letter code: ATP-dependent protease subunit HslV (176 aa).

Thr-2 is an active-site residue. Na(+) contacts are provided by Gly-157, Cys-160, and Thr-163.

It belongs to the peptidase T1B family. HslV subfamily. A double ring-shaped homohexamer of HslV is capped on each side by a ring-shaped HslU homohexamer. The assembly of the HslU/HslV complex is dependent on binding of ATP.

It is found in the cytoplasm. The enzyme catalyses ATP-dependent cleavage of peptide bonds with broad specificity.. With respect to regulation, allosterically activated by HslU binding. Its function is as follows. Protease subunit of a proteasome-like degradation complex believed to be a general protein degrading machinery. The chain is ATP-dependent protease subunit HslV from Proteus mirabilis (strain HI4320).